We begin with the raw amino-acid sequence, 210 residues long: Somatotropin-2 (210 aa).

An N-terminal signal peptide occupies residues 1–22 (MGQVFLLMPVLLVSCFLGQGAA). Residue His-38 coordinates Zn(2+). Cys-71 and Cys-183 are disulfide-bonded. Glu-192 contacts Zn(2+). Cys-200 and Cys-208 are joined by a disulfide.

It belongs to the somatotropin/prolactin family.

The protein resides in the secreted. Growth hormone plays an important role in growth control and is involved in the regulation of several anabolic processes. Implicated as an osmoregulatory substance important for seawater adaptation. In Oncorhynchus mykiss (Rainbow trout), this protein is Somatotropin-2 (gh2).